Consider the following 210-residue polypeptide: Ras-related protein Rab-43 (210 aa).

23 to 30 (GDASVGKT) lines the GTP pocket. An Effector region motif is present at residues 45 to 53 (QGSTIGVDF). Ser-47 carries the phosphoserine modification. Residue 71 to 75 (DTAGQ) coordinates GTP. Position 80 is a phosphothreonine (Thr-80). Residues 129-132 (NKSD) and 161-162 (AK) each bind GTP. S-geranylgeranyl cysteine attachment occurs at residues Cys-208 and Cys-210. At Cys-210 the chain carries Cysteine methyl ester.

This sequence belongs to the small GTPase superfamily. Rab family. In terms of assembly, interacts with GDI1, GDI2 and CHM; phosphorylation at Thr-80 disrupts these interactions.

It localises to the cytoplasmic vesicle. It is found in the phagosome. The protein resides in the phagosome membrane. The protein localises to the golgi apparatus. Its subcellular location is the trans-Golgi network membrane. It localises to the trans-Golgi network. The small GTPases Rab are key regulators of intracellular membrane trafficking, from the formation of transport vesicles to their fusion with membranes. Rabs cycle between an inactive GDP-bound form and an active GTP-bound form that is able to recruit to membranes different set of downstream effectors directly responsible for vesicle formation, movement, tethering and fusion. The low intrinsic GTPase activity of RAB43 is activated by USP6NL. Involved in retrograde transport from the endocytic pathway to the Golgi apparatus. Involved in the transport of Shiga toxin from early and recycling endosomes to the trans-Golgi network. Required for the structural integrity of the Golgi complex. Plays a role in the maturation of phagosomes that engulf pathogens, such as S.aureus and Mycobacterium. The sequence is that of Ras-related protein Rab-43 (Rab43) from Rattus norvegicus (Rat).